A 228-amino-acid chain; its full sequence is Thymidylate kinase (228 aa).

A compositionally biased stretch (polar residues) spans 1-10; that stretch reads MSDSAVQRSS. The segment at 1–23 is disordered; it reads MSDSAVQRSSGRGRFITFEGGEG. Residue 20-27 participates in ATP binding; the sequence is GGEGTGKS.

Belongs to the thymidylate kinase family.

The enzyme catalyses dTMP + ATP = dTDP + ADP. Functionally, phosphorylation of dTMP to form dTDP in both de novo and salvage pathways of dTTP synthesis. This chain is Thymidylate kinase, found in Bradyrhizobium diazoefficiens (strain JCM 10833 / BCRC 13528 / IAM 13628 / NBRC 14792 / USDA 110).